Reading from the N-terminus, the 497-residue chain is Galactose-1-phosphate uridylyltransferase (497 aa).

The protein belongs to the galactose-1-phosphate uridylyltransferase type 2 family.

The protein resides in the cytoplasm. It catalyses the reaction alpha-D-galactose 1-phosphate + UDP-alpha-D-glucose = alpha-D-glucose 1-phosphate + UDP-alpha-D-galactose. It participates in carbohydrate metabolism; galactose metabolism. This Enterococcus faecalis (strain ATCC 700802 / V583) protein is Galactose-1-phosphate uridylyltransferase.